The chain runs to 254 residues: 3-oxo-5-alpha-steroid 4-dehydrogenase 2 (254 aa).

A run of 4 helical transmembrane segments spans residues 8 to 28 (SPVLAGSATLVALGALALYVA), 72 to 92 (PLSLFGPPGTVLLGLFCLHYF), 146 to 166 (FSLGVFLFILGMGINIHSDYI), and 206 to 226 (LATWSLPALAFAFFSLCFLGL).

Belongs to the steroid 5-alpha reductase family. As to expression, expressed in high levels in the prostate and many other androgen-sensitive tissues.

The protein localises to the microsome membrane. It is found in the endoplasmic reticulum membrane. It carries out the reaction a 3-oxo-5alpha-steroid + NADP(+) = a 3-oxo-Delta(4)-steroid + NADPH + H(+). The enzyme catalyses 17beta-hydroxy-5alpha-androstan-3-one + NADP(+) = testosterone + NADPH + H(+). The catalysed reaction is 5alpha-pregnane-3,20-dione + NADP(+) = progesterone + NADPH + H(+). Its function is as follows. Converts testosterone (T) into 5-alpha-dihydrotestosterone (DHT) and progesterone or corticosterone into their corresponding 5-alpha-3-oxosteroids. It plays a central role in sexual differentiation and androgen physiology. In Homo sapiens (Human), this protein is 3-oxo-5-alpha-steroid 4-dehydrogenase 2 (SRD5A2).